The following is an 842-amino-acid chain: Synaptonemal complex protein 2-like (842 aa).

Disordered stretches follow at residues 451 to 473 (GSLE…EPEQ), 505 to 560 (FARD…KQRV), 619 to 666 (STQK…SSLE), and 715 to 738 (EDAP…PGSV). Composition is skewed to basic and acidic residues over residues 458–470 (TEER…KQDE) and 505–525 (FARD…HDLL). Positions 543 to 559 (NHKRKSLRTYSQRKKQR) are enriched in basic residues. Composition is skewed to basic and acidic residues over residues 624-633 (GLEKPERRGS) and 643-655 (RVTD…EPRS).

This sequence belongs to the SYCP2 family. In terms of tissue distribution, specifically expressed in oocytes.

The protein resides in the nucleus. The protein localises to the chromosome. It localises to the centromere. Oocyte-specific protein that localizes to centromeres at the dictyate stage and regulates the survival of primordial oocytes. The polypeptide is Synaptonemal complex protein 2-like (Mus musculus (Mouse)).